The following is a 650-amino-acid chain: Threonine--tRNA ligase, chloroplastic/mitochondrial 2 (650 aa).

Residues Cys347, His398, and His524 each contribute to the Zn(2+) site.

It belongs to the class-II aminoacyl-tRNA synthetase family.

The protein resides in the plastid. Its subcellular location is the chloroplast. It localises to the mitochondrion. It catalyses the reaction tRNA(Thr) + L-threonine + ATP = L-threonyl-tRNA(Thr) + AMP + diphosphate + H(+). In Arabidopsis thaliana (Mouse-ear cress), this protein is Threonine--tRNA ligase, chloroplastic/mitochondrial 2.